The following is a 167-amino-acid chain: Gametocyte-specific factor 1 (167 aa).

CHHC U11-48K-type zinc fingers lie at residues 14-41 (LLQC…RKNH) and 48-75 (LATC…DDKS). 8 residues coordinate Zn(2+): Cys17, His23, His33, Cys37, Cys51, His57, His67, and Cys71.

This sequence belongs to the UPF0224 (FAM112) family.

It is found in the cytoplasm. Required for spermatogenesis and is involved in the suppression of retrotransposon transcription in male germ cells. In Bos taurus (Bovine), this protein is Gametocyte-specific factor 1 (GTSF1).